Consider the following 124-residue polypeptide: uncharacterized protein (124 aa).

A helical membrane pass occupies residues 13 to 33 (IIFMALYFVITGIVIRLIGYS).

It localises to the membrane. This is an uncharacterized protein from Bacillus anthracis.